Consider the following 198-residue polypeptide: Imidazoleglycerol-phosphate dehydratase (198 aa).

It belongs to the imidazoleglycerol-phosphate dehydratase family.

It is found in the cytoplasm. The enzyme catalyses D-erythro-1-(imidazol-4-yl)glycerol 3-phosphate = 3-(imidazol-4-yl)-2-oxopropyl phosphate + H2O. Its pathway is amino-acid biosynthesis; L-histidine biosynthesis; L-histidine from 5-phospho-alpha-D-ribose 1-diphosphate: step 6/9. The sequence is that of Imidazoleglycerol-phosphate dehydratase from Herminiimonas arsenicoxydans.